The primary structure comprises 122 residues: Holo-[acyl-carrier-protein] synthase (122 aa).

Mg(2+)-binding residues include aspartate 9 and glutamate 58.

Belongs to the P-Pant transferase superfamily. AcpS family. The cofactor is Mg(2+).

The protein localises to the cytoplasm. The enzyme catalyses apo-[ACP] + CoA = holo-[ACP] + adenosine 3',5'-bisphosphate + H(+). Transfers the 4'-phosphopantetheine moiety from coenzyme A to a Ser of acyl-carrier-protein. This Chlamydia felis (strain Fe/C-56) (Chlamydophila felis) protein is Holo-[acyl-carrier-protein] synthase.